The chain runs to 427 residues: ATP-sensitive inward rectifier potassium channel 12 (427 aa).

Residues 1-77 lie on the Cytoplasmic side of the membrane; sequence MTAASRANPY…LADMFTTCVD (77 aa). The residue at position 75 (Cys75) is an S-nitrosocysteine. A helical transmembrane segment spans residues 78 to 104; sequence IRWRYMLLIFSLAFLASWLLFGIIFWV. 2 residues coordinate a 1,2-diacyl-sn-glycero-3-phospho-(1D-myo-inositol-4,5-bisphosphate): Arg79 and Arg81. The Extracellular segment spans residues 105 to 129; sequence IAVAHGDLEPAEGRGRTPCVLQVHG. Cys123 and Cys155 form a disulfide bridge. Residues 130–146 constitute an intramembrane region (helical; Pore-forming); that stretch reads FMAAFLFSIETQTTIGY. Positions 143, 144, 145, and 146 each coordinate K(+). Residues 143–148 carry the Selectivity filter motif; the sequence is TIGYGL. Over 147 to 155 the chain is Extracellular; the sequence is GLRCVTEEC. A helical membrane pass occupies residues 156–183; that stretch reads PVAVFMVVAQSIVGCIIDSFMIGAIMAK. A 1,2-diacyl-sn-glycero-3-phospho-(1D-myo-inositol-4,5-bisphosphate) contacts are provided by Lys183 and Lys188. Topologically, residues 184–427 are cytoplasmic; the sequence is MGRPKKRAQT…ERPYRRESEI (244 aa). A disordered region spans residues 387–427; it reads DEEDEVATDRDGRSPQPEHDFDRLQASSGALERPYRRESEI. Basic and acidic residues predominate over residues 393–409; that stretch reads ATDRDGRSPQPEHDFDR. The PDZ-binding motif lies at 425 to 427; that stretch reads SEI.

Belongs to the inward rectifier-type potassium channel (TC 1.A.2.1) family. KCNJ12 subfamily. In terms of assembly, homotetramer. Forms heteromer with KCNJ4. Can form heteromeric channels with Kir2.6/KCNJ18. Association, via its PDZ-recognition domain, with LIN7A, LIN7B, LIN7C, DLG1, CASK and APBA1 plays a key role in its localization and trafficking. Highest level in cerebellum. Moderately found in kidney, forebrain and skeletal muscle. Not detected in uterus, liver and pancreas.

It is found in the membrane. Its subcellular location is the cell membrane. It localises to the sarcolemma. The protein localises to the T-tubule. It catalyses the reaction K(+)(in) = K(+)(out). Its activity is regulated as follows. Activated by phosphatidylinositol 4,5-biphosphate (PtdIns(4,5)P2). PtdIns(4,5)P2 binding to the cytoplasmic side of the channel triggers a conformation change leading to channel opening. Inhibited by Ba(2+). Functionally, inward rectifying potassium channel that probably participates in controlling the resting membrane potential in electrically excitable cells. It probably participates in establishing action potential waveform and excitability of neuronal and muscle tissues. Inward rectifier potassium channels are characterized by a greater tendency to allow potassium to flow into the cell rather than out of it. Their voltage dependence is regulated by the concentration of extracellular potassium; as external potassium is raised, the voltage range of the channel opening shifts to more positive voltages. The inward rectification is mainly due to the blockage of outward current by internal magnesium. The sequence is that of ATP-sensitive inward rectifier potassium channel 12 (Kcnj12) from Rattus norvegicus (Rat).